Here is a 588-residue protein sequence, read N- to C-terminus: Adenine deaminase (588 aa).

This sequence belongs to the metallo-dependent hydrolases superfamily. Adenine deaminase family. As to quaternary structure, homodimer. Mn(2+) is required as a cofactor.

The enzyme catalyses adenine + H2O + H(+) = hypoxanthine + NH4(+). This is Adenine deaminase from Shigella flexneri serotype 5b (strain 8401).